The sequence spans 473 residues: Ribulose bisphosphate carboxylase large chain 1 (473 aa).

Positions 116 and 166 each coordinate substrate. The Proton acceptor role is filled by Lys-168. Position 170 (Lys-170) interacts with substrate. The Mg(2+) site is built by Lys-194, Asp-196, and Glu-197. Lys-194 carries the post-translational modification N6-carboxylysine. The active-site Proton acceptor is the His-287. Residues Arg-288, His-320, and Ser-372 each contribute to the substrate site.

Belongs to the RuBisCO large chain family. Type I subfamily. As to quaternary structure, heterohexadecamer of 8 large chains and 8 small chains. Requires Mg(2+) as cofactor.

It catalyses the reaction 2 (2R)-3-phosphoglycerate + 2 H(+) = D-ribulose 1,5-bisphosphate + CO2 + H2O. The catalysed reaction is D-ribulose 1,5-bisphosphate + O2 = 2-phosphoglycolate + (2R)-3-phosphoglycerate + 2 H(+). Its function is as follows. RuBisCO catalyzes two reactions: the carboxylation of D-ribulose 1,5-bisphosphate, the primary event in carbon dioxide fixation, as well as the oxidative fragmentation of the pentose substrate. Both reactions occur simultaneously and in competition at the same active site. This is Ribulose bisphosphate carboxylase large chain 1 from Acidithiobacillus ferrooxidans (strain ATCC 23270 / DSM 14882 / CIP 104768 / NCIMB 8455) (Ferrobacillus ferrooxidans (strain ATCC 23270)).